The chain runs to 211 residues: V-type ATP synthase subunit D (211 aa).

This sequence belongs to the V-ATPase D subunit family.

Produces ATP from ADP in the presence of a proton gradient across the membrane. The sequence is that of V-type ATP synthase subunit D from Fusobacterium nucleatum subsp. nucleatum (strain ATCC 25586 / DSM 15643 / BCRC 10681 / CIP 101130 / JCM 8532 / KCTC 2640 / LMG 13131 / VPI 4355).